A 525-amino-acid polypeptide reads, in one-letter code: GMP synthase [glutamine-hydrolyzing] (525 aa).

One can recognise a Glutamine amidotransferase type-1 domain in the interval R7 to S207. The active-site Nucleophile is C84. Catalysis depends on residues H181 and E183. The GMPS ATP-PPase domain occupies W208–R400. S235–L241 contributes to the ATP binding site.

As to quaternary structure, homodimer.

It carries out the reaction XMP + L-glutamine + ATP + H2O = GMP + L-glutamate + AMP + diphosphate + 2 H(+). The protein operates within purine metabolism; GMP biosynthesis; GMP from XMP (L-Gln route): step 1/1. Its function is as follows. Catalyzes the synthesis of GMP from XMP. This is GMP synthase [glutamine-hydrolyzing] from Blochmanniella pennsylvanica (strain BPEN).